A 191-amino-acid polypeptide reads, in one-letter code: Holliday junction branch migration complex subunit RuvA (191 aa).

The tract at residues 1–64 (MIGRLTGTLA…EDAQLLYGFL (64 aa)) is domain I. The segment at 65–138 (TATERATFRQ…KGKLGPDLAL (74 aa)) is domain II. Residues 138–142 (LPGAV) form a flexible linker region. The interval 143 to 191 (IRNEAQSDIVQALIALGYNEREAAAAIKPLPADVGVSDGIKLALRALGK) is domain III.

This sequence belongs to the RuvA family. Homotetramer. Forms an RuvA(8)-RuvB(12)-Holliday junction (HJ) complex. HJ DNA is sandwiched between 2 RuvA tetramers; dsDNA enters through RuvA and exits via RuvB. An RuvB hexamer assembles on each DNA strand where it exits the tetramer. Each RuvB hexamer is contacted by two RuvA subunits (via domain III) on 2 adjacent RuvB subunits; this complex drives branch migration. In the full resolvosome a probable DNA-RuvA(4)-RuvB(12)-RuvC(2) complex forms which resolves the HJ.

The protein resides in the cytoplasm. Functionally, the RuvA-RuvB-RuvC complex processes Holliday junction (HJ) DNA during genetic recombination and DNA repair, while the RuvA-RuvB complex plays an important role in the rescue of blocked DNA replication forks via replication fork reversal (RFR). RuvA specifically binds to HJ cruciform DNA, conferring on it an open structure. The RuvB hexamer acts as an ATP-dependent pump, pulling dsDNA into and through the RuvAB complex. HJ branch migration allows RuvC to scan DNA until it finds its consensus sequence, where it cleaves and resolves the cruciform DNA. The chain is Holliday junction branch migration complex subunit RuvA from Leptothrix cholodnii (strain ATCC 51168 / LMG 8142 / SP-6) (Leptothrix discophora (strain SP-6)).